The sequence spans 137 residues: Nucleoside diphosphate kinase (137 aa).

ATP is bound by residues Lys-10, Phe-59, Arg-87, Thr-93, Arg-104, and Asn-114. His-117 functions as the Pros-phosphohistidine intermediate in the catalytic mechanism.

It belongs to the NDK family. As to quaternary structure, homotetramer. The cofactor is Mg(2+).

Its subcellular location is the cytoplasm. The enzyme catalyses a 2'-deoxyribonucleoside 5'-diphosphate + ATP = a 2'-deoxyribonucleoside 5'-triphosphate + ADP. The catalysed reaction is a ribonucleoside 5'-diphosphate + ATP = a ribonucleoside 5'-triphosphate + ADP. Major role in the synthesis of nucleoside triphosphates other than ATP. The ATP gamma phosphate is transferred to the NDP beta phosphate via a ping-pong mechanism, using a phosphorylated active-site intermediate. This chain is Nucleoside diphosphate kinase, found in Streptomyces coelicolor (strain ATCC BAA-471 / A3(2) / M145).